Consider the following 1116-residue polypeptide: MAP kinase kinase kinase mkh1 (1116 aa).

Disordered stretches follow at residues 510–601 (LKMP…SNSL) and 618–647 (ALDE…ENHH). Residues 515 to 531 (NSGSSAPQSPSSNTSAS) are compositionally biased toward low complexity. The span at 553–569 (LRRKNTLTRRPSIRHAR) shows a compositional bias: basic residues. Low complexity predominate over residues 588–601 (SFDPKASSKSSNSL). Positions 634–647 (PKQSSSQVPKENHH) are enriched in polar residues. One can recognise a Protein kinase domain in the interval 825-1094 (WMKGELIGNG…AEELLNHPFM (270 aa)). ATP is bound by residues 831–839 (IGNGTYGKV) and lysine 854. Aspartate 955 acts as the Proton acceptor in catalysis.

It belongs to the protein kinase superfamily. STE Ser/Thr protein kinase family. MAP kinase kinase kinase subfamily.

It catalyses the reaction L-seryl-[protein] + ATP = O-phospho-L-seryl-[protein] + ADP + H(+). It carries out the reaction L-threonyl-[protein] + ATP = O-phospho-L-threonyl-[protein] + ADP + H(+). Functionally, may regulate cell morphology, cell wall integrity, salt resistance, cell cycle reentry from stationary-phase arrest, and filamentous growth in response to stress. Activates the MAP kinase kinase skh1/pek1 by phosphorylation. This Schizosaccharomyces pombe (strain 972 / ATCC 24843) (Fission yeast) protein is MAP kinase kinase kinase mkh1 (mkh1).